Here is a 288-residue protein sequence, read N- to C-terminus: HTH-type transcriptional regulator YofA (288 aa).

Residues 1 to 58 (MESGDLKIFQAVARKGSISKAAESLHYVQSNVTNRIQQLERQLQTQLFYRTNRGMTLT) enclose the HTH lysR-type domain. Positions 18 to 37 (ISKAAESLHYVQSNVTNRIQ) form a DNA-binding region, H-T-H motif.

Belongs to the LysR transcriptional regulatory family.

It is found in the cytoplasm. Functionally, regulates expression of the cell division protein ftsW, and is essential for cell viability during stationary phase. The protein is HTH-type transcriptional regulator YofA (yofA) of Bacillus velezensis (strain DSM 23117 / BGSC 10A6 / LMG 26770 / FZB42) (Bacillus amyloliquefaciens subsp. plantarum).